A 184-amino-acid chain; its full sequence is Large ribosomal subunit protein uL5 (184 aa).

It belongs to the universal ribosomal protein uL5 family. As to quaternary structure, part of the 50S ribosomal subunit; part of the 5S rRNA/L5/L18/L25 subcomplex. Contacts the 5S rRNA and the P site tRNA. Forms a bridge to the 30S subunit in the 70S ribosome.

This is one of the proteins that bind and probably mediate the attachment of the 5S RNA into the large ribosomal subunit, where it forms part of the central protuberance. In the 70S ribosome it contacts protein S13 of the 30S subunit (bridge B1b), connecting the 2 subunits; this bridge is implicated in subunit movement. Contacts the P site tRNA; the 5S rRNA and some of its associated proteins might help stabilize positioning of ribosome-bound tRNAs. The protein is Large ribosomal subunit protein uL5 of Fervidobacterium nodosum (strain ATCC 35602 / DSM 5306 / Rt17-B1).